A 211-amino-acid chain; its full sequence is N-(5'-phosphoribosyl)anthranilate isomerase (211 aa).

Belongs to the TrpF family.

The catalysed reaction is N-(5-phospho-beta-D-ribosyl)anthranilate = 1-(2-carboxyphenylamino)-1-deoxy-D-ribulose 5-phosphate. It participates in amino-acid biosynthesis; L-tryptophan biosynthesis; L-tryptophan from chorismate: step 3/5. In Nitrosomonas europaea (strain ATCC 19718 / CIP 103999 / KCTC 2705 / NBRC 14298), this protein is N-(5'-phosphoribosyl)anthranilate isomerase.